The following is a 195-amino-acid chain: Peptidyl-tRNA hydrolase (195 aa).

Tyr-17 is a tRNA binding site. The active-site Proton acceptor is the His-22. 3 residues coordinate tRNA: Phe-68, Asn-70, and Asn-116.

This sequence belongs to the PTH family. As to quaternary structure, monomer.

The protein localises to the cytoplasm. It catalyses the reaction an N-acyl-L-alpha-aminoacyl-tRNA + H2O = an N-acyl-L-amino acid + a tRNA + H(+). Hydrolyzes ribosome-free peptidyl-tRNAs (with 1 or more amino acids incorporated), which drop off the ribosome during protein synthesis, or as a result of ribosome stalling. Its function is as follows. Catalyzes the release of premature peptidyl moieties from peptidyl-tRNA molecules trapped in stalled 50S ribosomal subunits, and thus maintains levels of free tRNAs and 50S ribosomes. This Shewanella loihica (strain ATCC BAA-1088 / PV-4) protein is Peptidyl-tRNA hydrolase.